Here is a 104-residue protein sequence, read N- to C-terminus: Urease subunit beta (104 aa).

The protein belongs to the urease beta subunit family. Heterotrimer of UreA (gamma), UreB (beta) and UreC (alpha) subunits. Three heterotrimers associate to form the active enzyme.

Its subcellular location is the cytoplasm. The catalysed reaction is urea + 2 H2O + H(+) = hydrogencarbonate + 2 NH4(+). It functions in the pathway nitrogen metabolism; urea degradation; CO(2) and NH(3) from urea (urease route): step 1/1. This chain is Urease subunit beta, found in Methylocella silvestris (strain DSM 15510 / CIP 108128 / LMG 27833 / NCIMB 13906 / BL2).